We begin with the raw amino-acid sequence, 300 residues long: 4-hydroxy-tetrahydrodipicolinate synthase (300 aa).

A pyruvate-binding site is contributed by T53. Y141 functions as the Proton donor/acceptor in the catalytic mechanism. The active-site Schiff-base intermediate with substrate is the K169. T211 contributes to the pyruvate binding site.

Belongs to the DapA family. In terms of assembly, homotetramer; dimer of dimers.

It is found in the cytoplasm. The enzyme catalyses L-aspartate 4-semialdehyde + pyruvate = (2S,4S)-4-hydroxy-2,3,4,5-tetrahydrodipicolinate + H2O + H(+). Its pathway is amino-acid biosynthesis; L-lysine biosynthesis via DAP pathway; (S)-tetrahydrodipicolinate from L-aspartate: step 3/4. Catalyzes the condensation of (S)-aspartate-beta-semialdehyde [(S)-ASA] and pyruvate to 4-hydroxy-tetrahydrodipicolinate (HTPA). The sequence is that of 4-hydroxy-tetrahydrodipicolinate synthase from Rickettsia massiliae (strain Mtu5).